A 329-amino-acid polypeptide reads, in one-letter code: RNA polymerase sigma factor SigB (329 aa).

Residues 1–12 (MTSPSDVEASTE) are compositionally biased toward polar residues. Residues 1-27 (MTSPSDVEASTETVDRGSRRNQTNDNP) are disordered. A Polymerase core binding motif is present at residues 120 to 133 (DLIQEGNLGLIRAM). Positions 290–309 (LDQIGRQFGLSRERVRQIER) form a DNA-binding region, H-T-H motif.

Belongs to the sigma-70 factor family.

Its function is as follows. Sigma factors are initiation factors that promote the attachment of RNA polymerase to specific initiation sites and are then released. The chain is RNA polymerase sigma factor SigB (sigB) from Corynebacterium diphtheriae (strain ATCC 700971 / NCTC 13129 / Biotype gravis).